The sequence spans 444 residues: Glutamate-1-semialdehyde 2,1-aminomutase (444 aa).

Position 267 is an N6-(pyridoxal phosphate)lysine (lysine 267).

Belongs to the class-III pyridoxal-phosphate-dependent aminotransferase family. HemL subfamily. In terms of assembly, homodimer. It depends on pyridoxal 5'-phosphate as a cofactor.

The protein resides in the cytoplasm. The enzyme catalyses (S)-4-amino-5-oxopentanoate = 5-aminolevulinate. The protein operates within porphyrin-containing compound metabolism; protoporphyrin-IX biosynthesis; 5-aminolevulinate from L-glutamyl-tRNA(Glu): step 2/2. In Xylella fastidiosa (strain Temecula1 / ATCC 700964), this protein is Glutamate-1-semialdehyde 2,1-aminomutase.